Consider the following 994-residue polypeptide: E3 ubiquitin-protein ligase Arkadia (994 aa).

Glycyl lysine isopeptide (Lys-Gly) (interchain with G-Cter in SUMO2) cross-links involve residues K19, K28, K34, K47, K59, K73, K87, K96, and K110. A compositionally biased stretch (basic and acidic residues) spans 66 to 89 (HLCDDSQKQEKEMNGNQQEQEKSL). The tract at residues 66 to 106 (HLCDDSQKQEKEMNGNQQEQEKSLVVRKKRKSQQAGPSYVQ) is disordered. The disordered stretch occupies residues 120 to 191 (QHLGTPSDED…HKWPRTETES (72 aa)). Low complexity predominate over residues 132–151 (SSFSDCLSSPSSSLHFGDSD). Positions 164 to 173 (RHSQTILNAK) are enriched in polar residues. K173 participates in a covalent cross-link: Glycyl lysine isopeptide (Lys-Gly) (interchain with G-Cter in SUMO2). Basic residues predominate over residues 174-184 (SRSHSARSHKW). Residues K198 and K218 each participate in a glycyl lysine isopeptide (Lys-Gly) (interchain with G-Cter in SUMO2) cross-link. The disordered stretch occupies residues 212–277 (CRKRFVKNNS…SSSTEGEEDL (66 aa)). Positions 234–247 (MQRKKREVLARRKY) are enriched in basic residues. Residues 241–404 (VLARRKYALL…VPTTSARMES (164 aa)) are interaction with AXIN1. Residues 252–271 (SSSSSSENDLSSESSSSSST) show a composition bias toward low complexity. Residues 300 to 304 (VVVIE) carry the SUMO interaction motif 1 (SIM) motif. Positions 325–331 (EVEIVTV) match the SUMO interaction motif 2 (SIM) motif. The interval 337-371 (SRSTLGHSRSHWSQGSSSHASRPQEPRNRSRISTV) is disordered. Over residues 347–357 (HWSQGSSSHAS) the composition is skewed to low complexity. The SUMO interaction motif 3 (SIM) motif lies at 382 to 386 (VVDLT). Disordered stretches follow at residues 388 to 476 (DEDE…AMPR), 508 to 537 (HGHH…DPAC), 610 to 684 (APSQ…VDYV), and 696 to 742 (ISSH…APPA). The span at 395-467 (VPTTSARMES…SRRTTSSAVT (73 aa)) shows a compositional bias: polar residues. Over residues 508 to 522 (HGHHFQHHHHHHHTP) the composition is skewed to basic residues. Residues 670-680 (NPPPQTQPPPQ) show a composition bias toward pro residues. The interval 907 to 909 (YPH) is ubiquitin binding. Residues K923 and K927 each participate in a glycyl lysine isopeptide (Lys-Gly) (interchain with G-Cter in SUMO2) cross-link. Residues C942 and C945 each contribute to the Zn(2+) site. An RING-type; atypical zinc finger spans residues 942–983 (CTICLSILEEGEDVRRLPCMHLFHQVCVDQWLITNKKCPICR). Positions 957 to 961 (RLPCM) are ubiquitin binding. Residues H965 and C968 each contribute to the Zn(2+) site.

It belongs to the Arkadia family. Monomer. Interacts with SMAD6, SMAD7, AXIN1, AXIN2 and SKIL isoform SNON. Interacts with (phosphorylated) SMAD2 and SMAD3. Part of a complex containing RNF111, AXIN1 and SMAD7. Interacts (via SIM domains) with SUMO1 and SUMO2. As to expression, broadly expressed.

Its subcellular location is the nucleus. The protein resides in the cytoplasm. The protein localises to the PML body. It carries out the reaction S-ubiquitinyl-[E2 ubiquitin-conjugating enzyme]-L-cysteine + [acceptor protein]-L-lysine = [E2 ubiquitin-conjugating enzyme]-L-cysteine + N(6)-ubiquitinyl-[acceptor protein]-L-lysine.. It functions in the pathway protein modification; protein ubiquitination. Binds free ubiquitin non-covalently via its RING-type zinc finger. Ubiquitin-binding leads to enhance the E3 ubiquitin-protein ligase activity by stabilizing the ubiquitin-conjugating enzyme E2 (donor ubiquitin) in the 'closed' conformation and activating ubiquitin transfer. Its function is as follows. E3 ubiquitin-protein ligase. Required for mesoderm patterning during embryonic development. Acts as an enhancer of the transcriptional responses of the SMAD2/SMAD3 effectors, which are activated downstream of BMP. Acts by mediating ubiquitination and degradation of SMAD inhibitors such as SMAD7, inducing their proteasomal degradation and thereby enhancing the transcriptional activity of TGF-beta and BMP. In addition to enhance transcription of SMAD2/SMAD3 effectors, also regulates their turnover by mediating their ubiquitination and subsequent degradation, coupling their activation with degradation, thereby ensuring that only effectors 'in use' are degraded. Activates SMAD3/SMAD4-dependent transcription by triggering signal-induced degradation of SNON isoform of SKIL. Associates with UBE2D2 as an E2 enzyme. Specifically binds polysumoylated chains via SUMO interaction motifs (SIMs) and mediates ubiquitination of sumoylated substrates. Catalyzes 'Lys-63'-linked ubiquitination of sumoylated XPC in response to UV irradiation, promoting nucleotide excision repair. Mediates ubiquitination and degradation of sumoylated PML. The regulation of the BMP-SMAD signaling is however independent of sumoylation and is not dependent of SUMO interaction motifs (SIMs). The chain is E3 ubiquitin-protein ligase Arkadia from Homo sapiens (Human).